The sequence spans 355 residues: MRNKKTLVVMAGGTGGHVFPGLAVADALKEQGWAVSWLGTADRMEAQLVPKHGYEIDFIDIAGIRGNGLKRLLMAPIRIIKSIWQARSVLKKRRVDLVLGMGGFASGPGGIAAWSMGIPVILHEQNAVAGLTNRILSLFSKRVLMGFSGAFKSGKAILVGNPVRKQLVDLPVKKISSEDVALKVLVVGGSLGAKVLNDLLPAVFSSFDNENFNIMHQSGEGHYQAVQKGYEQRLVKANVQEFITDMASAYDWADLVICRAGALTVAELAVVGLPAIFVPLPHAVDDHQTKNAQYLVSQEAAVLIAQKELTAKKISDYLRLFLQNRKLLTAMSQKSRKAAIIDATESVASICNQLV.

Residues 14–16 (TGG), Asn-126, Arg-164, Ser-190, Ile-243, 262–267 (ALTVAE), and Gln-288 contribute to the UDP-N-acetyl-alpha-D-glucosamine site.

The protein belongs to the glycosyltransferase 28 family. MurG subfamily.

It is found in the cell inner membrane. The catalysed reaction is di-trans,octa-cis-undecaprenyl diphospho-N-acetyl-alpha-D-muramoyl-L-alanyl-D-glutamyl-meso-2,6-diaminopimeloyl-D-alanyl-D-alanine + UDP-N-acetyl-alpha-D-glucosamine = di-trans,octa-cis-undecaprenyl diphospho-[N-acetyl-alpha-D-glucosaminyl-(1-&gt;4)]-N-acetyl-alpha-D-muramoyl-L-alanyl-D-glutamyl-meso-2,6-diaminopimeloyl-D-alanyl-D-alanine + UDP + H(+). Its pathway is cell wall biogenesis; peptidoglycan biosynthesis. In terms of biological role, cell wall formation. Catalyzes the transfer of a GlcNAc subunit on undecaprenyl-pyrophosphoryl-MurNAc-pentapeptide (lipid intermediate I) to form undecaprenyl-pyrophosphoryl-MurNAc-(pentapeptide)GlcNAc (lipid intermediate II). This Psychromonas ingrahamii (strain DSM 17664 / CCUG 51855 / 37) protein is UDP-N-acetylglucosamine--N-acetylmuramyl-(pentapeptide) pyrophosphoryl-undecaprenol N-acetylglucosamine transferase.